The primary structure comprises 1608 residues: DNA-directed RNA polymerase III subunit rpc2 (1608 aa).

Zn(2+)-binding residues include Cys1557, Cys1560, Cys1569, and Cys1572. The C4-type zinc finger occupies 1557 to 1572 (CKNCGFLGYEGYCQYC).

The protein belongs to the RNA polymerase beta chain family. Component of the RNA polymerase III (Pol III) complex. This protein undergoes a protein self splicing that involves a post-translational excision of the intervening region (intein) followed by peptide ligation.

The protein localises to the nucleus. The catalysed reaction is RNA(n) + a ribonucleoside 5'-triphosphate = RNA(n+1) + diphosphate. Functionally, DNA-dependent RNA polymerase catalyzes the transcription of DNA into RNA using the four ribonucleoside triphosphates as substrates. Second largest core component of RNA polymerase III which synthesizes small RNAs, such as 5S rRNA and tRNAs. Proposed to contribute to the polymerase catalytic activity and forms the polymerase active center together with the largest subunit. Pol III is composed of mobile elements and rpc2 is part of the core element with the central large cleft and probably a clamp element that moves to open and close the cleft. The sequence is that of DNA-directed RNA polymerase III subunit rpc2 (polr3b) from Dictyostelium discoideum (Social amoeba).